Reading from the N-terminus, the 483-residue chain is PRAME family member 12 (483 aa).

The LRR 1; degenerate repeat unit spans residues 97–122 (RWKLQVLDLRNVDENFWGIWSGASAL). The LRR 2; degenerate repeat unit spans residues 177 to 201 (HVCCKELQIFGIAIHRIIEVLNTVE). Residues 202–228 (LDCIQEVEVCCPWELSILIRFAPYLGQ) form an LRR 3; degenerate repeat. The LRR 4; degenerate repeat unit spans residues 229 to 264 (MRNLRKLVLFNIHVSACIPLDRKEQFVIQFTSQFLK). LRR repeat units lie at residues 265 to 290 (LDYF…LRCL), 291 to 322 (QAPL…RQLK), 323 to 341 (ELDL…PLSV), 347 to 374 (EATL…ALSR), and 375 to 399 (CSQL…LLRH).

The protein belongs to the PRAME family.

The sequence is that of PRAME family member 12 from Homo sapiens (Human).